Reading from the N-terminus, the 264-residue chain is uncharacterized protein (264 aa).

2 disordered regions span residues 1–52 (MPRS…AVPG) and 123–207 (GGRW…PWTR). Positions 29 to 40 (AAHPTTSPTAAS) are enriched in low complexity. Residues 144–154 (HFQSSGAQQES) show a composition bias toward polar residues. Over residues 188–197 (ARKSACKCPR) the composition is skewed to basic residues.

This is an uncharacterized protein from Homo sapiens (Human).